We begin with the raw amino-acid sequence, 96 residues long: Co-chaperonin GroES (96 aa).

This sequence belongs to the GroES chaperonin family. In terms of assembly, heptamer of 7 subunits arranged in a ring. Interacts with the chaperonin GroEL.

The protein localises to the cytoplasm. In terms of biological role, together with the chaperonin GroEL, plays an essential role in assisting protein folding. The GroEL-GroES system forms a nano-cage that allows encapsulation of the non-native substrate proteins and provides a physical environment optimized to promote and accelerate protein folding. GroES binds to the apical surface of the GroEL ring, thereby capping the opening of the GroEL channel. This is Co-chaperonin GroES from Aliivibrio fischeri (strain ATCC 700601 / ES114) (Vibrio fischeri).